The sequence spans 215 residues: Urease accessory protein UreF (215 aa).

The protein belongs to the UreF family. UreD, UreF and UreG form a complex that acts as a GTP-hydrolysis-dependent molecular chaperone, activating the urease apoprotein by helping to assemble the nickel containing metallocenter of UreC. The UreE protein probably delivers the nickel.

Its subcellular location is the cytoplasm. Its function is as follows. Required for maturation of urease via the functional incorporation of the urease nickel metallocenter. This chain is Urease accessory protein UreF, found in Paracoccus denitrificans (strain Pd 1222).